The primary structure comprises 561 residues: DNA ligase B (561 aa).

K128 serves as the catalytic N6-AMP-lysine intermediate.

It belongs to the NAD-dependent DNA ligase family. LigB subfamily.

The enzyme catalyses NAD(+) + (deoxyribonucleotide)n-3'-hydroxyl + 5'-phospho-(deoxyribonucleotide)m = (deoxyribonucleotide)n+m + AMP + beta-nicotinamide D-nucleotide.. Functionally, catalyzes the formation of phosphodiester linkages between 5'-phosphoryl and 3'-hydroxyl groups in double-stranded DNA using NAD as a coenzyme and as the energy source for the reaction. In Pseudomonas syringae pv. tomato (strain ATCC BAA-871 / DC3000), this protein is DNA ligase B.